A 194-amino-acid chain; its full sequence is Large ribosomal subunit protein bL9 (194 aa).

A disordered region spans residues E167–S194.

Belongs to the bacterial ribosomal protein bL9 family.

In terms of biological role, binds to the 23S rRNA. The polypeptide is Large ribosomal subunit protein bL9 (Caulobacter sp. (strain K31)).